The primary structure comprises 617 residues: Glutamine--fructose-6-phosphate aminotransferase [isomerizing] (617 aa).

Residue C2 is the Nucleophile; for GATase activity of the active site. The 221-residue stretch at 2–222 (CGIIGLAFAE…DGEFGWISPE (221 aa)) folds into the Glutamine amidotransferase type-2 domain. 2 consecutive SIS domains span residues 293–432 (AAGL…EAGR) and 466–607 (AASL…PDKP). The active-site For Fru-6P isomerization activity is the K612.

In terms of assembly, homodimer.

It localises to the cytoplasm. It catalyses the reaction D-fructose 6-phosphate + L-glutamine = D-glucosamine 6-phosphate + L-glutamate. Its function is as follows. Catalyzes the first step in hexosamine metabolism, converting fructose-6P into glucosamine-6P using glutamine as a nitrogen source. This Aeropyrum pernix (strain ATCC 700893 / DSM 11879 / JCM 9820 / NBRC 100138 / K1) protein is Glutamine--fructose-6-phosphate aminotransferase [isomerizing].